A 157-amino-acid polypeptide reads, in one-letter code: Transcription elongation factor GreA (157 aa).

A coiled-coil region spans residues 9–30 (LEGAQQLKEELKRRKTTDRKRI).

It belongs to the GreA/GreB family.

In terms of biological role, necessary for efficient RNA polymerase transcription elongation past template-encoded arresting sites. The arresting sites in DNA have the property of trapping a certain fraction of elongating RNA polymerases that pass through, resulting in locked ternary complexes. Cleavage of the nascent transcript by cleavage factors such as GreA or GreB allows the resumption of elongation from the new 3'terminus. GreA releases sequences of 2 to 3 nucleotides. The sequence is that of Transcription elongation factor GreA from Magnetococcus marinus (strain ATCC BAA-1437 / JCM 17883 / MC-1).